Reading from the N-terminus, the 233-residue chain is Large ribosomal subunit protein uL1 (233 aa).

It belongs to the universal ribosomal protein uL1 family. In terms of assembly, part of the 50S ribosomal subunit.

Binds directly to 23S rRNA. The L1 stalk is quite mobile in the ribosome, and is involved in E site tRNA release. In terms of biological role, protein L1 is also a translational repressor protein, it controls the translation of the L11 operon by binding to its mRNA. The protein is Large ribosomal subunit protein uL1 of Brucella suis (strain ATCC 23445 / NCTC 10510).